Consider the following 1468-residue polypeptide: Potassium channel K2 (1468 aa).

6 helical membrane-spanning segments follow: residues 48–68 (MIYIGIGILLKIILIIIYWIY), 146–165 (FNCYFCNTRDILYAIIWYIS), 185–209 (IYIYNILLILLSSSYIDLVMIIISY), 221–240 (LLIDVFFSSPSAFFFSRHFF), 246–264 (IDIYFLMGFLRIIKVFLNV), and 285–306 (IILGVLLLCNAFASTLYTIQGI). Residues 326–344 (YFYFSIISISTVGYGDIIP) constitute an intramembrane region (pore-forming). Residues 351-368 (VICIFFIFWTFIWVPIQF) form a helical membrane-spanning segment. The segment at 804-823 (TCARTNESHKNNRLRSRRSQ) is disordered. Basic residues predominate over residues 814–823 (NNRLRSRRSQ). A coiled-coil region spans residues 1141-1185 (KSNKNSNNNNKCEQIKQLNNNLTFKKNEKKTKSNKQNTNDTLERR).

It is found in the membrane. In terms of biological role, may be involved in transmembrane potassium transport at the subcellular level not affecting bulk potassium transport across the plasma membrane. The sequence is that of Potassium channel K2 from Plasmodium berghei (strain Anka).